The chain runs to 296 residues: tRNA-cytidine(32) 2-sulfurtransferase (296 aa).

The PP-loop motif motif lies at 72-77 (SGGKDS). [4Fe-4S] cluster-binding residues include Cys147, Cys150, and Cys238.

The protein belongs to the TtcA family. Homodimer. Mg(2+) serves as cofactor. Requires [4Fe-4S] cluster as cofactor.

The protein resides in the cytoplasm. The enzyme catalyses cytidine(32) in tRNA + S-sulfanyl-L-cysteinyl-[cysteine desulfurase] + AH2 + ATP = 2-thiocytidine(32) in tRNA + L-cysteinyl-[cysteine desulfurase] + A + AMP + diphosphate + H(+). The protein operates within tRNA modification. Catalyzes the ATP-dependent 2-thiolation of cytidine in position 32 of tRNA, to form 2-thiocytidine (s(2)C32). The sulfur atoms are provided by the cysteine/cysteine desulfurase (IscS) system. In Sinorhizobium fredii (strain NBRC 101917 / NGR234), this protein is tRNA-cytidine(32) 2-sulfurtransferase.